Consider the following 420-residue polypeptide: Innexin-3 (420 aa).

A run of 4 helical transmembrane segments spans residues 33 to 53, 104 to 124, 193 to 213, and 278 to 298; these read ATLLAFFSIMVSCKQYVGSAI, WVPIVLAIQAFMFYLPSWIWS, MLYICIKLMYLANVFVQFIIL, and IYLFIWFWFVFVLITTFINTL. The disordered stretch occupies residues 378–405; it reads NRDFHHGHSTKSTSPGLEEGHHEHLYTP. Residues 395–405 show a composition bias toward basic and acidic residues; sequence EEGHHEHLYTP.

This sequence belongs to the pannexin family. In terms of assembly, interacts with F-actin. As to expression, evenly distributed along the adjoining membranes of the two pm5 pharyngeal muscle cells.

The protein resides in the cell membrane. It is found in the cell junction. Its subcellular location is the gap junction. In terms of biological role, structural component of gap junctions. Plays a role in maintaining gap junction activity to promote phayngeal muscle contraction. The protein is Innexin-3 of Caenorhabditis elegans.